We begin with the raw amino-acid sequence, 496 residues long: RNA-binding motif protein, Y chromosome, family 1 member F/J (496 aa).

Positions 8–85 (GKLFIGGLNR…KAIKVEQAKK (78 aa)) constitute an RRM domain. Disordered stretches follow at residues 81 to 345 (EQAK…YAPP) and 452 to 496 (KDQR…SSRY). Low complexity-rich tracts occupy residues 97–114 (PASS…SARG) and 149–159 (PVKRGPSSRSG). Polar residues predominate over residues 175 to 184 (NSWMGSQGPM). Basic and acidic residues-rich tracts occupy residues 204–214 (RNDRMSTRHDG), 242–253 (DNGHSNRDEHSS), 276–289 (AYRD…DESY), 313–326 (GYRD…HESY), 335–345 (SSRETRDYAPP), and 484–496 (GESR…SSRY).

Interacts with splicing factor proteins SFRS3/SRP20, TRA2B/SFRS10, KHDRBS1/SAM68 and KHDRBS3. In terms of tissue distribution, testis-specific.

Its subcellular location is the nucleus. Functionally, RNA-binding protein which may be involved in spermatogenesis. Required for sperm development, possibly by participating in pre-mRNA splicing in the testis. This Homo sapiens (Human) protein is RNA-binding motif protein, Y chromosome, family 1 member F/J (RBMY1F).